The chain runs to 473 residues: FAD-dependent oxidoreductase dpasF (473 aa).

The N-terminal stretch at 1 to 21 (MNRLLASALLVGSAVVAPVSA) is a signal peptide. N-linked (GlcNAc...) asparagine glycosylation is found at Asn26, Asn54, Asn92, Asn133, Asn185, Asn276, and Asn401.

This sequence belongs to the beta-cyclopiazonate dehydrogenase family. FAD serves as cofactor.

It functions in the pathway secondary metabolite biosynthesis; terpenoid biosynthesis. Functionally, FAD-dependent oxidoreductase; part of the gene cluster that mediates the biosynthesis of the diterpenoid pyrones subglutinols A and B. The first step of the pathway is the synthesis of the alpha-pyrone moiety by the polyketide synthase dpasA via condensation of one acetyl-CoA starter unit with 3 malonyl-CoA units and 2 methylations. The alpha-pyrone is then combined with geranylgeranyl pyrophosphate (GGPP) formed by the GGPP synthase dpasD through the action of the prenyltransferase dpasC to yield a linear alpha-pyrone diterpenoid. Subsequent steps in the diterpenoid pyrone biosynthetic pathway involve the decalin core formation, which is initiated by the epoxidation of the C10-C11 olefin by the FAD-dependent oxidoreductase dpasE, and is followed by a cyclization cascade catalyzed by the terpene cyclase dpasB. The FAD-linked oxidoreductase dpasF is then involved in tetrahydrofuran (THF) ring formation at the C5 unit to complete the formation of subglutinols A and B. DpasF possesses also an additional catalytic ability of multi-step oxidations to generate a new DDP analog with an enone system at the C5 named FDDP A. This Apiospora sacchari (Arthrinium sacchari) protein is FAD-dependent oxidoreductase dpasF.